The chain runs to 427 residues: Enolase (427 aa).

Gln163 is a binding site for (2R)-2-phosphoglycerate. Catalysis depends on Glu205, which acts as the Proton donor. Asp242, Glu285, and Asp312 together coordinate Mg(2+). (2R)-2-phosphoglycerate contacts are provided by Lys337, Arg366, Ser367, and Lys388. Lys337 functions as the Proton acceptor in the catalytic mechanism.

This sequence belongs to the enolase family. Mg(2+) is required as a cofactor.

Its subcellular location is the cytoplasm. It is found in the secreted. It localises to the cell surface. It catalyses the reaction (2R)-2-phosphoglycerate = phosphoenolpyruvate + H2O. The protein operates within carbohydrate degradation; glycolysis; pyruvate from D-glyceraldehyde 3-phosphate: step 4/5. Its function is as follows. Catalyzes the reversible conversion of 2-phosphoglycerate (2-PG) into phosphoenolpyruvate (PEP). It is essential for the degradation of carbohydrates via glycolysis. In Rhodopseudomonas palustris (strain ATCC BAA-98 / CGA009), this protein is Enolase.